Here is a 440-residue protein sequence, read N- to C-terminus: tRNA(Ile)-lysidine synthase (440 aa).

Residue 31–36 (SGGADS) participates in ATP binding.

Belongs to the tRNA(Ile)-lysidine synthase family.

It is found in the cytoplasm. The enzyme catalyses cytidine(34) in tRNA(Ile2) + L-lysine + ATP = lysidine(34) in tRNA(Ile2) + AMP + diphosphate + H(+). Its function is as follows. Ligates lysine onto the cytidine present at position 34 of the AUA codon-specific tRNA(Ile) that contains the anticodon CAU, in an ATP-dependent manner. Cytidine is converted to lysidine, thus changing the amino acid specificity of the tRNA from methionine to isoleucine. The chain is tRNA(Ile)-lysidine synthase from Borreliella afzelii (strain PKo) (Borrelia afzelii).